Reading from the N-terminus, the 940-residue chain is Leucine--tRNA ligase, mitochondrial (940 aa).

A 'HIGH' region motif is present at residues 54–64 (PYPSGALHMGH). The 'KMSKS' region motif lies at 638–642 (TINKL). Lys-641 contacts ATP. Positions 724 to 744 (KEQHQHQQQQHQQPLPSSEFN) are disordered.

The protein belongs to the class-I aminoacyl-tRNA synthetase family.

The protein localises to the mitochondrion. It catalyses the reaction tRNA(Leu) + L-leucine + ATP = L-leucyl-tRNA(Leu) + AMP + diphosphate. The protein is Leucine--tRNA ligase, mitochondrial (mleuS) of Dictyostelium discoideum (Social amoeba).